Reading from the N-terminus, the 446-residue chain is Sensor protein PfeS (446 aa).

Residues Met1–Lys9 are Cytoplasmic-facing. A helical transmembrane segment spans residues Leu10 to Leu30. Topologically, residues Ser31–Thr155 are periplasmic. Residues His156 to Tyr176 form a helical membrane-spanning segment. An HAMP domain is found at Arg177 to Ala233. At Arg177 to Ala446 the chain is on the cytoplasmic side. The region spanning Thr241 to Ala446 is the Histidine kinase domain. A Phosphohistidine; by autocatalysis modification is found at His244.

It localises to the cell inner membrane. It carries out the reaction ATP + protein L-histidine = ADP + protein N-phospho-L-histidine.. In terms of biological role, member of the two-component regulatory system PfeR/PfeS. May activate PfeR by phosphorylation. This Pseudomonas aeruginosa (strain ATCC 15692 / DSM 22644 / CIP 104116 / JCM 14847 / LMG 12228 / 1C / PRS 101 / PAO1) protein is Sensor protein PfeS (pfeS).